A 23-amino-acid chain; its full sequence is Basic phospholipase A2 CB1 (23 aa).

Heterodimer of an acidic subunit and a basic chain. The acidic subunit is non-toxic, without enzymatic activity and comprises 3 peptides that are cross-linked by 7 disulfide bridges. The basic subunit is toxic, has phospholipase A2 activity and is composed of a single chain. Ca(2+) is required as a cofactor. Contains 7 disulfide bonds. As to expression, expressed by the venom gland.

It localises to the secreted. The enzyme catalyses a 1,2-diacyl-sn-glycero-3-phosphocholine + H2O = a 1-acyl-sn-glycero-3-phosphocholine + a fatty acid + H(+). Snake venom phospholipase A2 (PLA2) that shows presynaptic neurotoxicity. PLA2 catalyzes the calcium-dependent hydrolysis of the 2-acyl groups in 3-sn-phosphoglycerides. The polypeptide is Basic phospholipase A2 CB1 (Crotalus basiliscus (Mexican west-coast rattlesnake)).